The chain runs to 74 residues: uncharacterized protein (74 aa).

This is an uncharacterized protein from Saccharomyces cerevisiae (strain ATCC 204508 / S288c) (Baker's yeast).